The sequence spans 573 residues: Putative ferric-chelate reductase 1 (573 aa).

Residues 4–24 (VCKSPQRLLFVLVSCFGLVQS) traverse the membrane as a helical segment. Positions 15–181 (LVSCFGLVQS…GTTGTSTTPA (167 aa)) constitute a Reelin domain. Positions 213–328 (GCYFVAVQAS…NEYYLMIAAG (116 aa)) constitute a DOMON domain. N-linked (GlcNAc...) asparagine glycans are attached at residues Asn286 and Asn300. Residues 332-532 (QGNIQFHTNK…YILQDLNLRA (201 aa)) enclose the Cytochrome b561 domain. A helical transmembrane segment spans residues 369–389 (AHGCLMLISWMATGSIGMIIA). Residues His370 and His411 each coordinate heme b. Transmembrane regions (helical) follow at residues 414 to 434 (LMTL…VSAG) and 441 to 461 (HPVL…VAAF). Heme b-binding residues include His441 and His477. 3 helical membrane-spanning segments follow: residues 479–499 (CNAF…LALF), 506–526 (GWML…YILQ), and 550–570 (ILLF…LVGI).

The protein belongs to the FRRS1 family. It depends on heme b as a cofactor.

It localises to the membrane. In terms of biological role, putative ferric-chelate reductases reduce Fe(3+) to Fe(2+) before its transport from the endosome to the cytoplasm. The sequence is that of Putative ferric-chelate reductase 1 (frrs1) from Danio rerio (Zebrafish).